Reading from the N-terminus, the 327-residue chain is tRNA pseudouridine synthase B (327 aa).

Residue Asp-69 is the Nucleophile of the active site. Substrate-binding residues include Tyr-97, Tyr-201, and Leu-222.

The protein belongs to the pseudouridine synthase TruB family. Type 1 subfamily.

It catalyses the reaction uridine(55) in tRNA = pseudouridine(55) in tRNA. Its function is as follows. Responsible for synthesis of pseudouridine from uracil-55 in the psi GC loop of transfer RNAs. This chain is tRNA pseudouridine synthase B, found in Wigglesworthia glossinidia brevipalpis.